The sequence spans 187 residues: Phosphatidylethanolamine-binding protein 2 (187 aa).

Phosphoserine is present on residues Ser-13, Ser-52, and Ser-54.

It belongs to the phosphatidylethanolamine-binding protein family. As to expression, testis specific.

Its subcellular location is the cytoplasm. Functionally, may bind to phospholipids. May act as serine protease inhibitor. This Mus musculus (Mouse) protein is Phosphatidylethanolamine-binding protein 2 (Pbp2).